The chain runs to 304 residues: MNYASILEQIRGDLQPFLGTGKVADYIPELATVPADSFGMAIVTASGEIFRTGEADTRFSIQSISKLFACTLAFQLLGDALWERVGREPSGTAFNSLVQLESERGKPRNPFINAGALVVTDVLCRRFVQAETALVEFMRRLTGETSIDYDSRIAQSELQHAHRNRAMAHFMASFGNMEMPPEVVVDAYCRQCAISMSCVELAKAALFLTNHGVAPVTGERILDTSSAKRLSALMLTCGTYDAAGDFVYRVGLPAKSGVGGGIVAVLPGEMAACVWSPALDSNGNSAAGVLALEWLTTYTGQSIF.

Residues Ser63, Asn113, Glu157, Asn164, Tyr188, Tyr240, and Val258 each contribute to the substrate site.

Belongs to the glutaminase family. Homotetramer.

The enzyme catalyses L-glutamine + H2O = L-glutamate + NH4(+). This chain is Glutaminase, found in Paraburkholderia phytofirmans (strain DSM 17436 / LMG 22146 / PsJN) (Burkholderia phytofirmans).